Reading from the N-terminus, the 27-residue chain is Conotoxin flf14b (27 aa).

2 cysteine pairs are disulfide-bonded: Cys-6/Cys-26 and Cys-10/Cys-22.

As to expression, expressed by the venom duct.

The protein localises to the secreted. This Conus anabathrum floridanus (Florida cone) protein is Conotoxin flf14b.